We begin with the raw amino-acid sequence, 865 residues long: Chitin synthase 3 (865 aa).

The tract at residues 1–59 (MASQYPGHQLDDIPSTNVYRPPPRHEDDEAEHALLHQNSAYQSQYDDPHSRPLTPGQES) is disordered. Positions 23–34 (PRHEDDEAEHAL) are enriched in basic and acidic residues. A compositionally biased stretch (polar residues) spans 36-45 (HQNSAYQSQY). Residues Asn-64, Asn-95, and Asn-538 are each glycosylated (N-linked (GlcNAc...) asparagine). Transmembrane regions (helical) follow at residues 565-585 (FFLH…WFSL), 620-640 (IINT…FILA), and 650-670 (VAYI…IVLS). N-linked (GlcNAc...) asparagine glycosylation occurs at Asn-682. A run of 3 helical transmembrane segments spans residues 707–727 (IVII…FLYM), 735–755 (SFAQ…IYAF), and 837–857 (LVAT…SDSL).

Belongs to the chitin synthase family. Class III subfamily.

The protein localises to the cell membrane. It carries out the reaction [(1-&gt;4)-N-acetyl-beta-D-glucosaminyl](n) + UDP-N-acetyl-alpha-D-glucosamine = [(1-&gt;4)-N-acetyl-beta-D-glucosaminyl](n+1) + UDP + H(+). In terms of biological role, polymerizes chitin, a structural polymer of the cell wall and septum, by transferring the sugar moiety of UDP-GlcNAc to the non-reducing end of the growing chitin polymer. Is not only stable at different pH, but is also able to tolerate a broad temperature range. With CHS2, plays an important role in virulence. In Exophiala dermatitidis (strain ATCC 34100 / CBS 525.76 / NIH/UT8656) (Black yeast), this protein is Chitin synthase 3.